The chain runs to 59 residues: Large ribosomal subunit protein bL32 (59 aa).

The tract at residues 1–24 (MAVQQNKKSPSKRGMHRSHDFLTS) is disordered.

The protein belongs to the bacterial ribosomal protein bL32 family.

The chain is Large ribosomal subunit protein bL32 from Ralstonia nicotianae (strain ATCC BAA-1114 / GMI1000) (Ralstonia solanacearum).